The following is a 154-amino-acid chain: Protein aau3 (154 aa).

The HTH rrf2-type domain occupies 2–132 (RLTKQTNYAV…QGYTIDDLVK (131 aa)). Cys-91, Cys-99, and Cys-105 together coordinate [2Fe-2S] cluster.

[2Fe-2S] cluster is required as a cofactor.

Its function is as follows. Required for growth utilizing PHB cycle intermediates. The protein is Protein aau3 (aau3) of Rhizobium meliloti (strain 1021) (Ensifer meliloti).